The sequence spans 356 residues: Histidinol-phosphate aminotransferase (356 aa).

Lys222 carries the post-translational modification N6-(pyridoxal phosphate)lysine.

The protein belongs to the class-II pyridoxal-phosphate-dependent aminotransferase family. Histidinol-phosphate aminotransferase subfamily. Homodimer. It depends on pyridoxal 5'-phosphate as a cofactor.

It carries out the reaction L-histidinol phosphate + 2-oxoglutarate = 3-(imidazol-4-yl)-2-oxopropyl phosphate + L-glutamate. It functions in the pathway amino-acid biosynthesis; L-histidine biosynthesis; L-histidine from 5-phospho-alpha-D-ribose 1-diphosphate: step 7/9. The protein is Histidinol-phosphate aminotransferase of Lactiplantibacillus plantarum (strain ATCC BAA-793 / NCIMB 8826 / WCFS1) (Lactobacillus plantarum).